The primary structure comprises 762 residues: 5-methyltetrahydropteroyltriglutamate--homocysteine methyltransferase (762 aa).

Residues Arg17–Lys20 and Lys111 contribute to the 5-methyltetrahydropteroyltri-L-glutamate site. Residues Ile435 to Ser437 and Glu488 each bind L-homocysteine. L-methionine is bound by residues Ile435–Ser437 and Glu488. 5-methyltetrahydropteroyltri-L-glutamate is bound by residues Arg519–Cys520 and Trp565. Asp603 contacts L-homocysteine. Asp603 is an L-methionine binding site. Residue Glu609 coordinates 5-methyltetrahydropteroyltri-L-glutamate. Residues His645, Cys647, and Glu669 each coordinate Zn(2+). The active-site Proton donor is the His698. Cys730 contacts Zn(2+).

The protein belongs to the vitamin-B12 independent methionine synthase family. Zn(2+) serves as cofactor.

The enzyme catalyses 5-methyltetrahydropteroyltri-L-glutamate + L-homocysteine = tetrahydropteroyltri-L-glutamate + L-methionine. It participates in amino-acid biosynthesis; L-methionine biosynthesis via de novo pathway; L-methionine from L-homocysteine (MetE route): step 1/1. Catalyzes the transfer of a methyl group from 5-methyltetrahydrofolate to homocysteine resulting in methionine formation. The chain is 5-methyltetrahydropteroyltriglutamate--homocysteine methyltransferase from Bacillus cereus (strain ATCC 10987 / NRS 248).